The chain runs to 159 residues: 2-C-methyl-D-erythritol 2,4-cyclodiphosphate synthase (159 aa).

Positions 10 and 12 each coordinate a divalent metal cation. 4-CDP-2-C-methyl-D-erythritol 2-phosphate is bound by residues Asp-10 to His-12 and His-36 to Ser-37. His-44 serves as a coordination point for a divalent metal cation. Residues Asp-58 to Gly-60, Thr-134 to Glu-137, Phe-141, and Arg-144 contribute to the 4-CDP-2-C-methyl-D-erythritol 2-phosphate site.

Belongs to the IspF family. As to quaternary structure, homotrimer. A divalent metal cation is required as a cofactor.

The catalysed reaction is 4-CDP-2-C-methyl-D-erythritol 2-phosphate = 2-C-methyl-D-erythritol 2,4-cyclic diphosphate + CMP. It participates in isoprenoid biosynthesis; isopentenyl diphosphate biosynthesis via DXP pathway; isopentenyl diphosphate from 1-deoxy-D-xylulose 5-phosphate: step 4/6. In terms of biological role, involved in the biosynthesis of isopentenyl diphosphate (IPP) and dimethylallyl diphosphate (DMAPP), two major building blocks of isoprenoid compounds. Catalyzes the conversion of 4-diphosphocytidyl-2-C-methyl-D-erythritol 2-phosphate (CDP-ME2P) to 2-C-methyl-D-erythritol 2,4-cyclodiphosphate (ME-CPP) with a corresponding release of cytidine 5-monophosphate (CMP). The polypeptide is 2-C-methyl-D-erythritol 2,4-cyclodiphosphate synthase (Cereibacter sphaeroides (strain ATCC 17025 / ATH 2.4.3) (Rhodobacter sphaeroides)).